A 113-amino-acid chain; its full sequence is Flagellar hook-basal body complex protein FliE (113 aa).

This sequence belongs to the FliE family.

Its subcellular location is the bacterial flagellum basal body. The sequence is that of Flagellar hook-basal body complex protein FliE from Rhizobium etli (strain ATCC 51251 / DSM 11541 / JCM 21823 / NBRC 15573 / CFN 42).